The following is a 457-amino-acid chain: tRNA modification GTPase MnmE (457 aa).

3 residues coordinate (6S)-5-formyl-5,6,7,8-tetrahydrofolate: arginine 25, glutamate 87, and arginine 126. A TrmE-type G domain is found at 223–377 (GISTAIIGRP…IEERINNLFF (155 aa)). Residue asparagine 233 participates in K(+) binding. Residues 233–238 (NVGKSS), 252–258 (TDIAGTT), and 277–280 (DTAG) contribute to the GTP site. Mg(2+) is bound at residue serine 237. K(+) is bound by residues threonine 252, isoleucine 254, and threonine 257. Threonine 258 provides a ligand contact to Mg(2+). Lysine 457 provides a ligand contact to (6S)-5-formyl-5,6,7,8-tetrahydrofolate.

It belongs to the TRAFAC class TrmE-Era-EngA-EngB-Septin-like GTPase superfamily. TrmE GTPase family. In terms of assembly, homodimer. Heterotetramer of two MnmE and two MnmG subunits. It depends on K(+) as a cofactor.

Its subcellular location is the cytoplasm. Exhibits a very high intrinsic GTPase hydrolysis rate. Involved in the addition of a carboxymethylaminomethyl (cmnm) group at the wobble position (U34) of certain tRNAs, forming tRNA-cmnm(5)s(2)U34. The sequence is that of tRNA modification GTPase MnmE from Streptococcus pneumoniae serotype 2 (strain D39 / NCTC 7466).